The chain runs to 1240 residues: DNA polymerase catalytic subunit (1240 aa).

Residues 1 to 22 (MFCAAGGPASPGGKPAARAASG) show a composition bias toward low complexity. Disordered stretches follow at residues 1–44 (MFCA…RRQN), 646–695 (GLDK…RETG), and 1103–1139 (AAAP…ASKP). The segment covering 669–688 (NGDEDKDDDEDGDEDGDERE) has biased composition (acidic residues).

It belongs to the DNA polymerase type-B family. As to quaternary structure, forms a complex with the ssDNA-binding protein UL29, the DNA polymerase processivity factor, and the alkaline exonuclease. Interacts with the putative helicase-primase complex subunit UL8; this interaction may coordinate leading and lagging strand DNA synthesis at the replication fork.

The protein localises to the host nucleus. It catalyses the reaction DNA(n) + a 2'-deoxyribonucleoside 5'-triphosphate = DNA(n+1) + diphosphate. The catalysed reaction is Endonucleolytic cleavage to 5'-phosphomonoester.. Functionally, replicates viral genomic DNA. The replication complex is composed of six viral proteins: the DNA polymerase, processivity factor, primase, primase-associated factor, helicase, and ssDNA-binding protein. Additionally, the polymerase contains an intrinsic ribonuclease H (RNase H) activity that specifically degrades RNA/DNA heteroduplexes or duplex DNA substrates in the 5' to 3' direction. Therefore, it can catalyze the excision of the RNA primers that initiate the synthesis of Okazaki fragments at a replication fork during viral DNA replication. The sequence is that of DNA polymerase catalytic subunit from Human herpesvirus 2 (strain HG52) (HHV-2).